The sequence spans 629 residues: Phosphomethylpyrimidine synthase (629 aa).

The span at 1-13 shows a compositional bias: polar residues; it reads MTTKSKNAINLSD. The tract at residues 1-22 is disordered; the sequence is MTTKSKNAINLSDSAKVDEQSV. Residues N233, M262, Y291, H327, 347–349, 388–391, and E427 each bind substrate; these read SRG and DGLR. Position 431 (H431) interacts with Zn(2+). Y454 provides a ligand contact to substrate. Residue H495 participates in Zn(2+) binding. Residues C575, C578, and C583 each coordinate [4Fe-4S] cluster.

This sequence belongs to the ThiC family. As to quaternary structure, homodimer. [4Fe-4S] cluster is required as a cofactor.

It carries out the reaction 5-amino-1-(5-phospho-beta-D-ribosyl)imidazole + S-adenosyl-L-methionine = 4-amino-2-methyl-5-(phosphooxymethyl)pyrimidine + CO + 5'-deoxyadenosine + formate + L-methionine + 3 H(+). Its pathway is cofactor biosynthesis; thiamine diphosphate biosynthesis. Functionally, catalyzes the synthesis of the hydroxymethylpyrimidine phosphate (HMP-P) moiety of thiamine from aminoimidazole ribotide (AIR) in a radical S-adenosyl-L-methionine (SAM)-dependent reaction. The chain is Phosphomethylpyrimidine synthase from Pseudomonas fluorescens (strain Pf0-1).